A 379-amino-acid polypeptide reads, in one-letter code: Dual-specificity RNA methyltransferase RlmN (379 aa).

The Proton acceptor role is filled by E95. Positions 101–345 constitute a Radical SAM core domain; the sequence is EETRGTLCVS…TTVRKTRGDD (245 aa). A disulfide bridge connects residues C108 and C350. Residues C115, C119, and C122 each coordinate [4Fe-4S] cluster. S-adenosyl-L-methionine-binding positions include 176 to 177, S208, 230 to 232, and N307; these read GE and SLH. C350 serves as the catalytic S-methylcysteine intermediate.

The protein belongs to the radical SAM superfamily. RlmN family. It depends on [4Fe-4S] cluster as a cofactor.

The protein resides in the cytoplasm. The catalysed reaction is adenosine(2503) in 23S rRNA + 2 reduced [2Fe-2S]-[ferredoxin] + 2 S-adenosyl-L-methionine = 2-methyladenosine(2503) in 23S rRNA + 5'-deoxyadenosine + L-methionine + 2 oxidized [2Fe-2S]-[ferredoxin] + S-adenosyl-L-homocysteine. The enzyme catalyses adenosine(37) in tRNA + 2 reduced [2Fe-2S]-[ferredoxin] + 2 S-adenosyl-L-methionine = 2-methyladenosine(37) in tRNA + 5'-deoxyadenosine + L-methionine + 2 oxidized [2Fe-2S]-[ferredoxin] + S-adenosyl-L-homocysteine. Functionally, specifically methylates position 2 of adenine 2503 in 23S rRNA and position 2 of adenine 37 in tRNAs. m2A2503 modification seems to play a crucial role in the proofreading step occurring at the peptidyl transferase center and thus would serve to optimize ribosomal fidelity. The protein is Dual-specificity RNA methyltransferase RlmN of Burkholderia vietnamiensis (strain G4 / LMG 22486) (Burkholderia cepacia (strain R1808)).